The chain runs to 175 residues: MAPTVMASSATSVAPFQGLKSTAGLPVSRRSNGASLGSVSNGGRIRCMQVWPIEGIKKFETLSYLPPLSTEGLLKQVDYLIRSKWVPCLEFRKVGFIFREHNVSPGYYDGRYWTMWKLPMFGCPAPTQVIPEVEEVRKEYPDPYCRIIGFDNMRQVQSVSFIASKPPGCEESGKA.

The N-terminal 46 residues, 1–46 (MAPTVMASSATSVAPFQGLKSTAGLPVSRRSNGASLGSVSNGGRIR), are a transit peptide targeting the chloroplast.

The protein belongs to the RuBisCO small chain family. As to quaternary structure, heterohexadecamer of 8 large and 8 small subunits.

The protein localises to the plastid. It is found in the chloroplast. Functionally, ruBisCO catalyzes two reactions: the carboxylation of D-ribulose 1,5-bisphosphate, the primary event in carbon dioxide fixation, as well as the oxidative fragmentation of the pentose substrate. Both reactions occur simultaneously and in competition at the same active site. Although the small subunit is not catalytic it is essential for maximal activity. The sequence is that of Ribulose bisphosphate carboxylase small subunit, chloroplastic from Aegilops tauschii (Tausch's goatgrass).